Reading from the N-terminus, the 42-residue chain is Beta-2-microglobulin (42 aa).

The Ig-like C1-type domain occupies Pro-5–Asx-42.

As to quaternary structure, heterodimer of an alpha chain and a beta chain. Beta-2-microglobulin is the beta-chain of major histocompatibility complex class I molecules.

It is found in the secreted. Component of the class I major histocompatibility complex (MHC). Involved in the presentation of peptide antigens to the immune system. The protein is Beta-2-microglobulin (B2M) of Canis lupus familiaris (Dog).